The following is a 438-amino-acid chain: Gamma-glutamyl phosphate reductase (438 aa).

Residues 1–21 (MTAQTSSDVTDQKTDLTRESE) form a disordered region. Residues 10 to 21 (TDQKTDLTRESE) show a composition bias toward basic and acidic residues.

The protein belongs to the gamma-glutamyl phosphate reductase family.

Its subcellular location is the cytoplasm. It catalyses the reaction L-glutamate 5-semialdehyde + phosphate + NADP(+) = L-glutamyl 5-phosphate + NADPH + H(+). It participates in amino-acid biosynthesis; L-proline biosynthesis; L-glutamate 5-semialdehyde from L-glutamate: step 2/2. Its function is as follows. Catalyzes the NADPH-dependent reduction of L-glutamate 5-phosphate into L-glutamate 5-semialdehyde and phosphate. The product spontaneously undergoes cyclization to form 1-pyrroline-5-carboxylate. The sequence is that of Gamma-glutamyl phosphate reductase from Corynebacterium efficiens (strain DSM 44549 / YS-314 / AJ 12310 / JCM 11189 / NBRC 100395).